Reading from the N-terminus, the 343-residue chain is Multidrug resistance protein MdtN (343 aa).

The Cytoplasmic segment spans residues 1–12 (MESTPKKAPRSK). The chain crosses the membrane as a helical; Signal-anchor for type II membrane protein span at residues 13-33 (FPALLVVALALVALVFVIWRV). The Periplasmic segment spans residues 34-343 (DSAPSTNDAY…ASAVANLEPQ (310 aa)).

Belongs to the membrane fusion protein (MFP) (TC 8.A.1) family. In terms of assembly, could be part of a tripartite efflux system composed of MdtN, MdtO and MdtP.

The protein localises to the cell inner membrane. Functionally, could be involved in resistance to puromycin, acriflavine and tetraphenylarsonium chloride. The polypeptide is Multidrug resistance protein MdtN (mdtN) (Escherichia coli O6:H1 (strain CFT073 / ATCC 700928 / UPEC)).